We begin with the raw amino-acid sequence, 118 residues long: Waprin-Enh1 (118 aa).

A signal peptide spans 1 to 24; it reads MKTLTGLLLVGLLALWIGLPSTSS. WAP domains lie at 25–72 and 74–118; these read KILF…RSCR and PPVL…RICK. Disulfide bonds link Cys-30/Cys-63, Cys-40/Cys-67, Cys-50/Cys-62, Cys-56/Cys-71, Cys-81/Cys-109, Cys-88/Cys-113, Cys-96/Cys-108, and Cys-102/Cys-117.

It belongs to the venom waprin family. In terms of tissue distribution, expressed by the venom gland.

It is found in the secreted. In terms of biological role, damages membranes of susceptible bacteria. Has no hemolytic activity. Not toxic to mice. Does not inhibit the proteinases elastase and cathepsin G. This is Waprin-Enh1 from Pseudoferania polylepis (Macleay's water snake).